Consider the following 469-residue polypeptide: uncharacterized protein (469 aa).

Disordered stretches follow at residues 248-314 (RDDN…EPES) and 327-418 (QMDQ…PRPT). Composition is skewed to polar residues over residues 292 to 305 (ESSNTRDQQTNAAS) and 350 to 365 (TARQPQVTPTRVPNTV). Over residues 366 to 377 (TATSASTPASTS) the composition is skewed to low complexity.

This is an uncharacterized protein from Cryphonectria parasitica (Chestnut blight fungus).